We begin with the raw amino-acid sequence, 353 residues long: UPF0283 membrane protein YcjF (353 aa).

Basic and acidic residues predominate over residues 1 to 19 (MSEPLKPRIDFAEPLKEEP). The disordered stretch occupies residues 1-35 (MSEPLKPRIDFAEPLKEEPTSAFKAQQTFSEAESR). 3 consecutive transmembrane segments (helical) span residues 70–90 (MVMGGLALFGASVVGQGVQWT), 100–120 (VALGGCAAGALIIGAGVGSVV), and 213–233 (ESTLMIAVSPLALVDMAFIAW).

This sequence belongs to the UPF0283 family.

The protein localises to the cell inner membrane. This is UPF0283 membrane protein YcjF from Salmonella paratyphi C (strain RKS4594).